The following is a 599-amino-acid chain: Adenine deaminase (599 aa).

It belongs to the metallo-dependent hydrolases superfamily. Adenine deaminase family. Requires Mn(2+) as cofactor.

The catalysed reaction is adenine + H2O + H(+) = hypoxanthine + NH4(+). In Clostridium botulinum (strain ATCC 19397 / Type A), this protein is Adenine deaminase.